We begin with the raw amino-acid sequence, 120 residues long: MFLLYEYDIFWAFLIISSVIPILAFRISGLLAPTSIGPEKLSSYESGIEPMGDAWLQFRIRYYMFALVFVVFDVETIFLYPWALSFDILGVSVFIEALIFVLILVLGLVYAWRKGALEWS.

The next 3 membrane-spanning stretches (helical) occupy residues 2-22 (FLLY…VIPI), 64-84 (MFAL…PWAL), and 88-108 (ILGV…VLGL).

It belongs to the complex I subunit 3 family. In terms of assembly, NDH is composed of at least 16 different subunits, 5 of which are encoded in the nucleus.

The protein resides in the plastid. It is found in the chloroplast thylakoid membrane. It catalyses the reaction a plastoquinone + NADH + (n+1) H(+)(in) = a plastoquinol + NAD(+) + n H(+)(out). It carries out the reaction a plastoquinone + NADPH + (n+1) H(+)(in) = a plastoquinol + NADP(+) + n H(+)(out). NDH shuttles electrons from NAD(P)H:plastoquinone, via FMN and iron-sulfur (Fe-S) centers, to quinones in the photosynthetic chain and possibly in a chloroplast respiratory chain. The immediate electron acceptor for the enzyme in this species is believed to be plastoquinone. Couples the redox reaction to proton translocation, and thus conserves the redox energy in a proton gradient. This Oenothera biennis (German evening primrose) protein is NAD(P)H-quinone oxidoreductase subunit 3, chloroplastic.